Reading from the N-terminus, the 383-residue chain is Putative glutamate--cysteine ligase 2 (383 aa).

It belongs to the glutamate--cysteine ligase type 2 family. YbdK subfamily.

It carries out the reaction L-cysteine + L-glutamate + ATP = gamma-L-glutamyl-L-cysteine + ADP + phosphate + H(+). Its function is as follows. ATP-dependent carboxylate-amine ligase which exhibits weak glutamate--cysteine ligase activity. The polypeptide is Putative glutamate--cysteine ligase 2 (Legionella pneumophila subsp. pneumophila (strain Philadelphia 1 / ATCC 33152 / DSM 7513)).